Consider the following 248-residue polypeptide: Clathrin light chain A (248 aa).

Residues 1-93 (MAELDPFGAP…YQESNGPTDS (93 aa)) are disordered. Gly residues predominate over residues 13 to 25 (APGGPALGNGVAG). Positions 100-162 (VDRLQSEPES…QLQKTKASNR (63 aa)) are involved in binding clathrin heavy chain. Residues serine 105 and serine 206 each carry the phosphoserine modification. An N6-acetyllysine modification is found at lysine 223. Phosphoserine is present on serine 236. Lysine 242 is modified (N6-acetyllysine).

It belongs to the clathrin light chain family. As to quaternary structure, clathrin coats are formed from molecules containing 3 heavy chains and 3 light chains. Interacts with CALY; the interaction stimulates clathrin self-assembly and clathrin-mediated endocytosis. Interacts with CKAP5 and TACC3 forming the TACC3/ch-TOG/clathrin complex located at spindle inter-microtubules bridges; the complex implicates clathrin triskelions.

The protein resides in the cytoplasmic vesicle membrane. It is found in the membrane. The protein localises to the coated pit. Its subcellular location is the cytoplasm. It localises to the cytoskeleton. The protein resides in the spindle. Its function is as follows. Clathrin is the major protein of the polyhedral coat of coated pits and vesicles. Acts as a component of the TACC3/ch-TOG/clathrin complex proposed to contribute to stabilization of kinetochore fibers of the mitotic spindle by acting as inter-microtubule bridge. The sequence is that of Clathrin light chain A (Clta) from Rattus norvegicus (Rat).